The chain runs to 89 residues: UPF0367 protein MAE_19160 (89 aa).

It belongs to the UPF0367 family.

The polypeptide is UPF0367 protein MAE_19160 (Microcystis aeruginosa (strain NIES-843 / IAM M-2473)).